The sequence spans 256 residues: Hydroxyacylglutathione hydrolase (256 aa).

Positions 53, 55, 57, 58, 113, 130, and 168 each coordinate Zn(2+).

The protein belongs to the metallo-beta-lactamase superfamily. Glyoxalase II family. In terms of assembly, monomer. Requires Zn(2+) as cofactor.

The enzyme catalyses an S-(2-hydroxyacyl)glutathione + H2O = a 2-hydroxy carboxylate + glutathione + H(+). It participates in secondary metabolite metabolism; methylglyoxal degradation; (R)-lactate from methylglyoxal: step 2/2. Thiolesterase that catalyzes the hydrolysis of S-D-lactoyl-glutathione to form glutathione and D-lactic acid. This is Hydroxyacylglutathione hydrolase from Tolumonas auensis (strain DSM 9187 / NBRC 110442 / TA 4).